A 507-amino-acid chain; its full sequence is Rho GTPase-activating protein 19 (507 aa).

The 194-residue stretch at 112–305 (APLTEEGIAQ…FMIKHSQKLF (194 aa)) folds into the Rho-GAP domain. Disordered regions lie at residues 344-371 (FLKH…QQHT), 400-419 (KNTP…KKHV), and 483-507 (DLQI…ETSI). Residues 355–369 (SSPSSSTSLQEQTQQ) are compositionally biased toward low complexity. Over residues 400-413 (KNTPRTPVSDTQVP) the composition is skewed to polar residues. Residues 483–492 (DLQIRKEASS) show a composition bias toward basic and acidic residues.

GTPase activator for the Rho-type GTPases by converting them to an inactive GDP-bound state. The polypeptide is Rho GTPase-activating protein 19 (arhgap19) (Xenopus laevis (African clawed frog)).